A 466-amino-acid chain; its full sequence is VGFKAGVKEYKLTYYTPEYETKDTDILAAFRVTPQPGVPPEEAGAAVAAESSTGTWTTVWTDGLTSLDRYKGRCYNIEPVPGEADQYICYVAYPLDLFEEGSVTNMFTSIVGNVFGFKALRALRLEDLRIPVAYVKTFQGPPHGIQVERDKLNKYGRPLLGCTIKPKLGLSAKNYGRACYECLRGGLDFTKDDENVNSQPFMRWRDRFLFCAEAIYKSQAETGEIKGHYLNATAGTCEEMMKRAIFARELGVPIVMHDYLTGGFTANTSLAHYCRDNGLLLHIHRAMHAVIDRQKNHGMHFRVLAKALRMSGGDHIHAGTVVGKLEGERDITLGFVDLLRDDFIEKDRSRGIYFTQDWVSLPGVIPVASGGIHVWHMPALTEIFGDDSVLQFGGGTLGHPWGNAPGAAANRVALEACVQARNEGRDLAAEGNTIIREASKWSPELAAACEVWKEIKFEFKAVDTLD.

Lysine 4 is modified (N6,N6,N6-trimethyllysine). Residues asparagine 113 and threonine 163 each coordinate substrate. Catalysis depends on lysine 165, which acts as the Proton acceptor. Residue lysine 167 coordinates substrate. Mg(2+) is bound by residues lysine 191, aspartate 193, and glutamate 194. Lysine 191 is subject to N6-carboxylysine. Histidine 284 functions as the Proton acceptor in the catalytic mechanism. Substrate contacts are provided by arginine 285, histidine 317, and serine 369.

It belongs to the RuBisCO large chain family. Type I subfamily. Heterohexadecamer of 8 large chains and 8 small chains; disulfide-linked. The disulfide link is formed within the large subunit homodimers. The cofactor is Mg(2+). Post-translationally, the disulfide bond which can form in the large chain dimeric partners within the hexadecamer appears to be associated with oxidative stress and protein turnover.

It localises to the plastid. The protein resides in the chloroplast. The catalysed reaction is 2 (2R)-3-phosphoglycerate + 2 H(+) = D-ribulose 1,5-bisphosphate + CO2 + H2O. The enzyme catalyses D-ribulose 1,5-bisphosphate + O2 = 2-phosphoglycolate + (2R)-3-phosphoglycerate + 2 H(+). RuBisCO catalyzes two reactions: the carboxylation of D-ribulose 1,5-bisphosphate, the primary event in carbon dioxide fixation, as well as the oxidative fragmentation of the pentose substrate in the photorespiration process. Both reactions occur simultaneously and in competition at the same active site. The sequence is that of Ribulose bisphosphate carboxylase large chain from Nelsonia canescens (Blue pussyleaf).